The sequence spans 154 residues: MYRMQLLSCIALSLALVTNSAPTSRSTKKTQLQLEHLLLDLQMILNGINNYKNPKLTRMLTFKFYMPKKATELKHLQCLEEELKPLEEVLNLAQSKNFHLRDTKDLISNINVIVLELKGSETTLMCEYADETATIVEFLNRWITFCQSIISTLT.

The N-terminal stretch at 1–20 (MYRMQLLSCIALSLALVTNS) is a signal peptide. O-linked (GalNAc...) threonine glycosylation is present at threonine 23. Cysteine 78 and cysteine 126 form a disulfide bridge.

This sequence belongs to the IL-2 family.

It localises to the secreted. Its function is as follows. Cytokine produced by activated CD4-positive helper T-cells and to a lesser extend activated CD8-positive T-cells and natural killer (NK) cells that plays pivotal roles in the immune response and tolerance. Binds to a receptor complex composed of either the high-affinity trimeric IL-2R (IL2RA/CD25, IL2RB/CD122 and IL2RG/CD132) or the low-affinity dimeric IL-2R (IL2RB and IL2RG). Interaction with the receptor leads to oligomerization and conformation changes in the IL-2R subunits resulting in downstream signaling starting with phosphorylation of JAK1 and JAK3. In turn, JAK1 and JAK3 phosphorylate the receptor to form a docking site leading to the phosphorylation of several substrates including STAT5. This process leads to activation of several pathways including STAT, phosphoinositide-3-kinase/PI3K and mitogen-activated protein kinase/MAPK pathways. Functions as a T-cell growth factor and can increase NK-cell cytolytic activity as well. Promotes strong proliferation of activated B-cells and subsequently immunoglobulin production. Plays a pivotal role in regulating the adaptive immune system by controlling the survival and proliferation of regulatory T-cells, which are required for the maintenance of immune tolerance. Moreover, participates in the differentiation and homeostasis of effector T-cell subsets, including Th1, Th2, Th17 as well as memory CD8-positive T-cells. This is Interleukin-2 (IL2) from Cercocebus atys (Sooty mangabey).